A 1342-amino-acid polypeptide reads, in one-letter code: DNA-directed RNA polymerase subunit beta (1342 aa).

This sequence belongs to the RNA polymerase beta chain family. The RNAP catalytic core consists of 2 alpha, 1 beta, 1 beta' and 1 omega subunit. When a sigma factor is associated with the core the holoenzyme is formed, which can initiate transcription.

It catalyses the reaction RNA(n) + a ribonucleoside 5'-triphosphate = RNA(n+1) + diphosphate. DNA-dependent RNA polymerase catalyzes the transcription of DNA into RNA using the four ribonucleoside triphosphates as substrates. In Histophilus somni (strain 2336) (Haemophilus somnus), this protein is DNA-directed RNA polymerase subunit beta.